The primary structure comprises 146 residues: Neutral phospholipase A2 B (146 aa).

Residues 1-21 form the signal peptide; the sequence is MNPAHLLILAAVCVSPLGASS. Positions 22-27 are excised as a propeptide; sequence NRPMPL. Intrachain disulfides connect C38/C98, C53/C145, C55/C71, C70/C126, C77/C119, C87/C112, and C105/C117. 3 residues coordinate Ca(2+): Y54, G56, and G58. H74 is an active-site residue. Position 75 (D75) interacts with Ca(2+). Residue D120 is part of the active site.

This sequence belongs to the phospholipase A2 family. Group I subfamily. D49 sub-subfamily. It depends on Ca(2+) as a cofactor. Expressed by the venom gland.

The protein localises to the secreted. It carries out the reaction a 1,2-diacyl-sn-glycero-3-phosphocholine + H2O = a 1-acyl-sn-glycero-3-phosphocholine + a fatty acid + H(+). Its function is as follows. PLA2 catalyzes the calcium-dependent hydrolysis of the 2-acyl groups in 3-sn-phosphoglycerides. In Naja sputatrix (Malayan spitting cobra), this protein is Neutral phospholipase A2 B.